The primary structure comprises 572 residues: Probable serine/threonine-protein kinase At1g54610 (572 aa).

The segment at 1-89 (MGCVFGREAA…SNPSKHWRGE (89 aa)) is disordered. Residues 9-40 (AATTTTAEAKQAKSSKASSGVVVVGESSVTKS) show a composition bias toward low complexity. Residues 47–67 (DVEKKKNEEANGDKERKSSKG) are compositionally biased toward basic and acidic residues. A compositionally biased stretch (polar residues) spans 74-83 (KPNPRLSNPS). The region spanning 118-402 (FEKIDKIGQG…ASAALKSEFF (285 aa)) is the Protein kinase domain. ATP is bound by residues 124 to 132 (IGQGTYSNV) and Lys-147. The Proton acceptor role is filled by Asp-242. Disordered regions lie at residues 409-474 (CEPA…NVDR) and 526-572 (SSFN…AVVA). Residues 419 to 434 (PSKEIDAKRRDEETRR) show a composition bias toward basic and acidic residues. The span at 554–572 (SRKKKDNTKSSKGKRAVVA) shows a compositional bias: basic residues.

This sequence belongs to the protein kinase superfamily. Ser/Thr protein kinase family.

The enzyme catalyses L-seryl-[protein] + ATP = O-phospho-L-seryl-[protein] + ADP + H(+). It carries out the reaction L-threonyl-[protein] + ATP = O-phospho-L-threonyl-[protein] + ADP + H(+). The sequence is that of Probable serine/threonine-protein kinase At1g54610 from Arabidopsis thaliana (Mouse-ear cress).